A 98-amino-acid polypeptide reads, in one-letter code: NADH-ubiquinone oxidoreductase chain 4L (98 aa).

The next 3 membrane-spanning stretches (helical) occupy residues P2 to F22, L30 to G50, and I61 to I81.

It belongs to the complex I subunit 4L family. As to quaternary structure, core subunit of respiratory chain NADH dehydrogenase (Complex I) which is composed of 45 different subunits.

Its subcellular location is the mitochondrion inner membrane. It catalyses the reaction a ubiquinone + NADH + 5 H(+)(in) = a ubiquinol + NAD(+) + 4 H(+)(out). Core subunit of the mitochondrial membrane respiratory chain NADH dehydrogenase (Complex I) which catalyzes electron transfer from NADH through the respiratory chain, using ubiquinone as an electron acceptor. Part of the enzyme membrane arm which is embedded in the lipid bilayer and involved in proton translocation. The chain is NADH-ubiquinone oxidoreductase chain 4L (MT-ND4L) from Bradypus tridactylus (Pale-throated three-toed sloth).